The following is a 196-amino-acid chain: MADGQLPFPCSYPSRLRRDPFRDSPLSSRLLDDGFGMDPFPDDLTAPWPEWALPRLSSAWPGTLRSGMVPRGPPATARFGVPAEGRSPPPFPGEPWKVCVNVHSFKPEELMVKTKDGYVEVSGKHEEKQQEGGIVSKNFTKKIQLPAEVDPATVFASLSPEGLLIIEAPQVPPYSPFGESSFNNELPQDNQEVTCS.

Residues 1–28 are disordered; the sequence is MADGQLPFPCSYPSRLRRDPFRDSPLSS. Residues serine 24 and serine 57 each carry the phosphoserine modification. Threonine 63 bears the Phosphothreonine mark. Asymmetric dimethylarginine is present on residues arginine 71 and arginine 78. A sHSP domain is found at 78 to 185; sequence RFGVPAEGRS…PFGESSFNNE (108 aa). At serine 87 the chain carries Phosphoserine. The segment at 176–196 is disordered; it reads PFGESSFNNELPQDNQEVTCS. Positions 178–196 are enriched in polar residues; it reads GESSFNNELPQDNQEVTCS.

Belongs to the small heat shock protein (HSP20) family. In terms of assembly, monomer. Forms a ternary complex with BAG3 and HSPA1A. Component of the chaperone-assisted selective autophagy (CASA) complex consisting of BAG3, HSPA8/HSC70, HSPB8 and STUB1/CHIP. Interacts with HSPB1. Interacts with DNAJB6. Interacts with BAG3. Highly expressed in skeletal muscle, heart, uterus, liver, lung and ovary. Low levels found in stomach and brain. Not detected in small intestine, large intestine, kidney, spleen and testis. In the ovary, expression is concentrated in the endometrium and in the connective tissue between the circular and longitudinal muscles of the myometrium.

The protein localises to the cytoplasm. It localises to the nucleus. Functionally, involved in the chaperone-assisted selective autophagy (CASA), a crucial process for protein quality control, particularly in mechanical strained cells and tissues such as muscle. Displays temperature-dependent chaperone activity. The sequence is that of Heat shock protein beta-8 (Hspb8) from Mus musculus (Mouse).